Here is a 91-residue protein sequence, read N- to C-terminus: Small ribosomal subunit protein uS19 (91 aa).

Belongs to the universal ribosomal protein uS19 family.

In terms of biological role, protein S19 forms a complex with S13 that binds strongly to the 16S ribosomal RNA. This is Small ribosomal subunit protein uS19 from Psychrobacter arcticus (strain DSM 17307 / VKM B-2377 / 273-4).